The chain runs to 503 residues: Probable cytosol aminopeptidase (503 aa).

Lysine 274 and aspartate 279 together coordinate Mn(2+). The active site involves lysine 286. Residues aspartate 297, aspartate 356, and glutamate 358 each coordinate Mn(2+). Arginine 360 is a catalytic residue.

It belongs to the peptidase M17 family. Requires Mn(2+) as cofactor.

Its subcellular location is the cytoplasm. It carries out the reaction Release of an N-terminal amino acid, Xaa-|-Yaa-, in which Xaa is preferably Leu, but may be other amino acids including Pro although not Arg or Lys, and Yaa may be Pro. Amino acid amides and methyl esters are also readily hydrolyzed, but rates on arylamides are exceedingly low.. The catalysed reaction is Release of an N-terminal amino acid, preferentially leucine, but not glutamic or aspartic acids.. Presumably involved in the processing and regular turnover of intracellular proteins. Catalyzes the removal of unsubstituted N-terminal amino acids from various peptides. This is Probable cytosol aminopeptidase from Burkholderia thailandensis (strain ATCC 700388 / DSM 13276 / CCUG 48851 / CIP 106301 / E264).